The following is an 87-amino-acid chain: Small ribosomal subunit protein bS20 (87 aa).

The segment at 1 to 26 is disordered; that stretch reads MANIKSAKKRAVQSEKARKHNASRRS.

It belongs to the bacterial ribosomal protein bS20 family.

Binds directly to 16S ribosomal RNA. This chain is Small ribosomal subunit protein bS20, found in Salmonella typhi.